A 458-amino-acid polypeptide reads, in one-letter code: Alpha-2C adrenergic receptor (458 aa).

At 1–51 (MASPALAAALAAAAAEGPNGSDAGEWGSGGGANASGTDWVPPPGQYSAGAV) the chain is on the extracellular side. Residues Asn19 and Asn33 are each glycosylated (N-linked (GlcNAc...) asparagine). A helical membrane pass occupies residues 52 to 76 (AGLAAVVGFLIVFTVVGNVLVVIAV). The Cytoplasmic segment spans residues 77–88 (LTSRALRAPQNL). Residues 89-114 (FLVSLASADILVATLVMPFSLANELM) traverse the membrane as a helical segment. Over 115 to 124 (AYWYFGQVWC) the chain is Extracellular. A disulfide bridge connects residues Cys124 and Cys202. A helical transmembrane segment spans residues 125-147 (GVYLALDVLFCTSSIVHLCAISL). The Cytoplasmic segment spans residues 148 to 168 (DRYWSVTQAVEYNLKRTPRRV). Residues 169–191 (KATIVAVWLISAVISFPPLVSFY) traverse the membrane as a helical segment. At 192–207 (RRPDGAAYPQCGLNDE) the chain is on the extracellular side. Residues 208-231 (TWYILSSCIGSFFAPCLIMGLVYA) form a helical membrane-spanning segment. The Cytoplasmic portion of the chain corresponds to 232 to 379 (RIYRVAKLRT…QAREKRFTFV (148 aa)). The disordered stretch occupies residues 245–343 (SEKRGPAGPD…SPGPGGRLSR (99 aa)). Residues 291–303 (RRRRRGALRRGGR) show a composition bias toward basic residues. Residues 380-403 (LAVVMGVFVLCWFPFFFSYSLYGI) traverse the membrane as a helical segment. At 404–416 (CREACQLPEPLFK) the chain is on the extracellular side. Residues 417–437 (FFFWIGYCNSSLNPVIYTVFN) traverse the membrane as a helical segment. Topologically, residues 438 to 458 (QDFRRSFKHILFRRRRRGFRQ) are cytoplasmic.

This sequence belongs to the G-protein coupled receptor 1 family. Adrenergic receptor subfamily. ADRA2C sub-subfamily.

The protein localises to the cell membrane. Functionally, alpha-2 adrenergic receptors mediate the catecholamine-induced inhibition of adenylate cyclase through the action of G proteins. The chain is Alpha-2C adrenergic receptor (Adra2c) from Mus musculus (Mouse).